The sequence spans 369 residues: MVKASVPCMNSGDKETSYGTCSLPQEIVLPKARPILEDTIKDMFSNVSSTDCIKVADLGCSSGPNTFMAISIVVDTFHEMCQQAQLKTSPEFQVFLNDLPENDFNNIFRSVASFTDRIKKGKGDKFGLCFVTGVPGSFYGRLFPNRSLHLVHSSYSVNWLSKACISFHVPDGIGNNKGSVYMAESSPPNVFKAHSRQFKEDFSTFLKLRSQEMIPGGRMVLTFNGRSNLYPSKQDDDWKLQLAKSLYDLVVEGIVKEADADSFNIPMYAPYKGELCEIIQKEDSFDLDKLEVVQINWGPRDVLTNEDFEFDKYQRGQKTANSVRAITEPMLASHFGEDILDKLFTGLAKYEAERLGYKLTSIVVSMKKK.

The S-adenosyl-L-homocysteine site is built by Tyr-18, Cys-60, Asn-65, Asp-98, Leu-99, Ser-137, and Phe-138. Mg(2+)-binding residues include Asn-176, Asp-261, Phe-263, and Asn-264.

Belongs to the methyltransferase superfamily. Type-7 methyltransferase family. The cofactor is Mg(2+).

This is Probable methyltransferase TCM_000331 from Theobroma cacao (Cacao).